The chain runs to 103 residues: MINPLLRPLLTEKSTGLTEKKGQYVFVVKPDADKTDIKKAVEKKFGVEVKSIRTINCLGKSRAQNTRKGRVTGKKSDWKKAIITLEKGQSIDYYSNTAQKSEG.

The protein belongs to the universal ribosomal protein uL23 family. As to quaternary structure, part of the 50S ribosomal subunit. Contacts protein L29, and trigger factor when it is bound to the ribosome.

In terms of biological role, one of the early assembly proteins it binds 23S rRNA. One of the proteins that surrounds the polypeptide exit tunnel on the outside of the ribosome. Forms the main docking site for trigger factor binding to the ribosome. This is Large ribosomal subunit protein uL23 from Pelodictyon phaeoclathratiforme (strain DSM 5477 / BU-1).